Reading from the N-terminus, the 256-residue chain is Ubiquinone/menaquinone biosynthesis C-methyltransferase UbiE (256 aa).

Residues Thr79, Asp100, and 128 to 129 (DA) contribute to the S-adenosyl-L-methionine site.

The protein belongs to the class I-like SAM-binding methyltransferase superfamily. MenG/UbiE family.

The catalysed reaction is a 2-demethylmenaquinol + S-adenosyl-L-methionine = a menaquinol + S-adenosyl-L-homocysteine + H(+). It carries out the reaction a 2-methoxy-6-(all-trans-polyprenyl)benzene-1,4-diol + S-adenosyl-L-methionine = a 5-methoxy-2-methyl-3-(all-trans-polyprenyl)benzene-1,4-diol + S-adenosyl-L-homocysteine + H(+). It functions in the pathway quinol/quinone metabolism; menaquinone biosynthesis; menaquinol from 1,4-dihydroxy-2-naphthoate: step 2/2. Its pathway is cofactor biosynthesis; ubiquinone biosynthesis. Its function is as follows. Methyltransferase required for the conversion of demethylmenaquinol (DMKH2) to menaquinol (MKH2) and the conversion of 2-polyprenyl-6-methoxy-1,4-benzoquinol (DDMQH2) to 2-polyprenyl-3-methyl-6-methoxy-1,4-benzoquinol (DMQH2). The sequence is that of Ubiquinone/menaquinone biosynthesis C-methyltransferase UbiE from Pseudomonas savastanoi pv. phaseolicola (strain 1448A / Race 6) (Pseudomonas syringae pv. phaseolicola (strain 1448A / Race 6)).